Consider the following 318-residue polypeptide: MLHLIYISIIVVLIIILISYTRKPKYFRITAPRSVALFHGIHPLNPKNYKTFSKEFETILNNAIEDGDFKGQLTEPCSYALRGGKYIRPIILMEIVRACQLQHSFGAPIYPAEAALAVEYFHVASLIIDDMPSFDNDVKRRNKDTVWARFGVAKAQMSALALTMQGFQNICRQIDWIKEHCPRFPDPNQLGALLCTFVSHSLNSAGSGQLVDTPEKTIPFFKIAFIMGWVLGTGTIEDIGMIERAAHCFGHAFQLADDIKDHDTDTGWNYAKIHGKQKTFDDVAQSLQECKKILHGKKIFTSIWNEIFQKVINVALGT.

A helical membrane pass occupies residues 1–21; that stretch reads MLHLIYISIIVVLIIILISYT. Residues lysine 85, arginine 88, and histidine 122 each contribute to the isopentenyl diphosphate site. Mg(2+) contacts are provided by aspartate 129 and aspartate 135. A dimethylallyl diphosphate-binding site is contributed by arginine 140. An isopentenyl diphosphate-binding site is contributed by arginine 141. Positions 216, 217, and 254 each coordinate dimethylallyl diphosphate.

It belongs to the FPP/GGPP synthase family. Asfivirus trans-prenyltransferase subfamily. It depends on Mg(2+) as a cofactor.

The protein resides in the host endoplasmic reticulum. Its subcellular location is the host membrane. It catalyses the reaction isopentenyl diphosphate + dimethylallyl diphosphate = (2E)-geranyl diphosphate + diphosphate. It carries out the reaction isopentenyl diphosphate + (2E)-geranyl diphosphate = (2E,6E)-farnesyl diphosphate + diphosphate. The enzyme catalyses isopentenyl diphosphate + (2E,6E)-farnesyl diphosphate = (2E,6E,10E)-geranylgeranyl diphosphate + diphosphate. The catalysed reaction is isopentenyl diphosphate + (2E,6E,10E)-geranylgeranyl diphosphate = (2E,6E,10E,14E)-geranylfarnesyl diphosphate + diphosphate. Its pathway is isoprenoid biosynthesis; farnesyl diphosphate biosynthesis; farnesyl diphosphate from geranyl diphosphate and isopentenyl diphosphate: step 1/1. The protein operates within isoprenoid biosynthesis; geranyl diphosphate biosynthesis; geranyl diphosphate from dimethylallyl diphosphate and isopentenyl diphosphate: step 1/1. It functions in the pathway isoprenoid biosynthesis; geranylgeranyl diphosphate biosynthesis; geranylgeranyl diphosphate from farnesyl diphosphate and isopentenyl diphosphate: step 1/1. Functionally, trans-prenyltransferase that catalyzes the sequential condensation of isopentenyl diphosphate (IPP) with different allylic diphosphates, such as dimethylallyl diphosphate (DMAPP), geranyl diphosphate (GPP), farnesyl diphosphate (FPP) and geranylgeranyl diphosphate (GGPP), farnesyl diphosphate being the best allylic substrate. The chain is Trans-prenyltransferase from African swine fever virus (strain Badajoz 1971 Vero-adapted) (Ba71V).